Reading from the N-terminus, the 326-residue chain is Probable fructokinase-4 (326 aa).

It belongs to the carbohydrate kinase PfkB family.

It catalyses the reaction D-fructose + ATP = D-fructose 6-phosphate + ADP + H(+). Its pathway is glycan biosynthesis; starch biosynthesis. In terms of biological role, may play an important role in maintaining the flux of carbon towards starch formation. The polypeptide is Probable fructokinase-4 (Arabidopsis thaliana (Mouse-ear cress)).